A 1368-amino-acid polypeptide reads, in one-letter code: MAP3K epsilon protein kinase 1 (1368 aa).

The Protein kinase domain maps to 20 to 274; sequence YMLGDEIGKG…AKTLLSHPWI (255 aa). HEAT repeat units follow at residues 25 to 62 and 86 to 125; these read EIGK…EDLN and SKTK…AVYI. ATP is bound by residues 26–34 and Lys49; that span reads IGKGAYGRV. The active-site Proton acceptor is the Asp144. The HEAT 3 repeat unit spans residues 218–256; the sequence is PYYDLQPMPALFRIVQDDNPPIPDSLSPDITDFLRQCFK. Disordered stretches follow at residues 296 to 415 and 430 to 507; these read EATA…KNTS and QTSH…PVAD. Acidic residues predominate over residues 351–364; that stretch reads LGEEGTDNSEDDIM. Composition is skewed to basic and acidic residues over residues 388 to 399 and 470 to 486; these read SDFHGKSERGET and SLHD…EGKP. Positions 488 to 502 are enriched in polar residues; the sequence is EASTSMPTSNVNQGD. HEAT repeat units follow at residues 533-571, 628-653, 654-695, 699-737, and 750-788; these read SNDG…LFPL, IPKS…DFQE, NACL…SSPL, MFIA…VFKL, and AAKN…RVRS. Residues 777-883 are disordered; that stretch reads GGLDGQAPRV…ISLSANRTST (107 aa). Over residues 791–808 the composition is skewed to polar residues; that stretch reads LDPNNPIFGQNETSSLSM. Composition is skewed to basic and acidic residues over residues 813–826 and 836–852; these read DVLK…EEPS and SDVH…DKPR. HEAT repeat units lie at residues 903 to 940, 1025 to 1063, 1067 to 1105, 1112 to 1150, 1154 to 1191, 1196 to 1234, 1258 to 1281, 1282 to 1318, and 1348 to 1368; these read EQVR…HESR, ATSS…ADTT, YMCS…DPNC, ADAI…INKR, QAAE…ASRN, LRAH…DNRK, RHFV…NKTL, AVNG…HHPR, and QVLV…NTIL.

Belongs to the protein kinase superfamily. Ser/Thr protein kinase family. Interacts with SGP1. Autophosphorylated. In terms of tissue distribution, expressed in both the sporophytic and the gametophytic tissues, especially in dividing cells. Mostly present in flower buds and mature flowers. Also accumulates in embryos, in roots apices, trichomes and ovule integuments.

It is found in the cytoplasm. It localises to the cytoskeleton. The protein localises to the microtubule organizing center. The protein resides in the nucleus. Its subcellular location is the nucleolus. It is found in the cell membrane. The enzyme catalyses L-seryl-[protein] + ATP = O-phospho-L-seryl-[protein] + ADP + H(+). It carries out the reaction L-threonyl-[protein] + ATP = O-phospho-L-threonyl-[protein] + ADP + H(+). In terms of biological role, serine/threonine-protein kinase involved in the spatial and temporal control system organizing cortical activities in mitotic and postmitotic cells. Required for the normal functioning of the plasma membrane in developing pollen. Involved in the regulation of cell expansion, cell elongation, and embryo development. The sequence is that of MAP3K epsilon protein kinase 1 from Arabidopsis thaliana (Mouse-ear cress).